Reading from the N-terminus, the 514-residue chain is tRNA-2-methylthio-N(6)-dimethylallyladenosine synthase (514 aa).

Positions 1–21 (MNEEQRKASSVDVLAERDKKA) are disordered. The MTTase N-terminal domain maps to 68-186 (RTFLIKTYGC…LPEILEEAYL (119 aa)). [4Fe-4S] cluster contacts are provided by cysteine 77, cysteine 113, cysteine 147, cysteine 223, cysteine 227, and cysteine 230. Residues 209-440 (REGNIKAWVN…KKVGHYSQIA (232 aa)) enclose the Radical SAM core domain. Residues 442 to 505 (SKYEGQTVTV…QYSLNGSFVK (64 aa)) form the TRAM domain.

It belongs to the methylthiotransferase family. MiaB subfamily. As to quaternary structure, monomer. [4Fe-4S] cluster is required as a cofactor.

It localises to the cytoplasm. The enzyme catalyses N(6)-dimethylallyladenosine(37) in tRNA + (sulfur carrier)-SH + AH2 + 2 S-adenosyl-L-methionine = 2-methylsulfanyl-N(6)-dimethylallyladenosine(37) in tRNA + (sulfur carrier)-H + 5'-deoxyadenosine + L-methionine + A + S-adenosyl-L-homocysteine + 2 H(+). Catalyzes the methylthiolation of N6-(dimethylallyl)adenosine (i(6)A), leading to the formation of 2-methylthio-N6-(dimethylallyl)adenosine (ms(2)i(6)A) at position 37 in tRNAs that read codons beginning with uridine. The polypeptide is tRNA-2-methylthio-N(6)-dimethylallyladenosine synthase (Staphylococcus aureus (strain MRSA252)).